A 469-amino-acid polypeptide reads, in one-letter code: Putative dipeptidase SSP1012 (469 aa).

His84 lines the Zn(2+) pocket. Residue Asp86 is part of the active site. Asp115 is a Zn(2+) binding site. Catalysis depends on Glu149, which acts as the Proton acceptor. Positions 150, 173, and 440 each coordinate Zn(2+).

Belongs to the peptidase M20A family. Zn(2+) serves as cofactor.

The sequence is that of Putative dipeptidase SSP1012 from Staphylococcus saprophyticus subsp. saprophyticus (strain ATCC 15305 / DSM 20229 / NCIMB 8711 / NCTC 7292 / S-41).